Consider the following 115-residue polypeptide: NADH-ubiquinone oxidoreductase chain 3 (115 aa).

3 consecutive transmembrane segments (helical) span residues 3-23 (FMLT…IAFW), 55-75 (FFLV…LLPL), and 84-104 (LEVM…SLAY).

This sequence belongs to the complex I subunit 3 family. As to quaternary structure, core subunit of respiratory chain NADH dehydrogenase (Complex I) which is composed of 45 different subunits. Interacts with TMEM186. Interacts with TMEM242.

It localises to the mitochondrion inner membrane. It carries out the reaction a ubiquinone + NADH + 5 H(+)(in) = a ubiquinol + NAD(+) + 4 H(+)(out). In terms of biological role, core subunit of the mitochondrial membrane respiratory chain NADH dehydrogenase (Complex I) which catalyzes electron transfer from NADH through the respiratory chain, using ubiquinone as an electron acceptor. Essential for the catalytic activity of complex I. This is NADH-ubiquinone oxidoreductase chain 3 from Rhinolophus pumilus (Horseshoe bat).